The chain runs to 840 residues: Phosphatidylinositol-3-phosphatase myotubularin-1 (840 aa).

Residues 1-28 (MTPPRPPSGRVRSLRDYSSESEKMDGTG) are disordered. Basic and acidic residues predominate over residues 13–25 (SLRDYSSESEKMD). Residues 45–112 (GSFSNLSCLL…ATIEKFNKMV (68 aa)) enclose the GRAM domain. The Myotubularin phosphatase domain occupies 199–650 (GKSSIRASMD…LAPTLWPQFH (452 aa)). Residues 332–335 (NGAM), 357–358 (NI), 443–449 (CSDGWDR), and R489 each bind substrate. The active-site Phosphocysteine intermediate is the C443. The interval 506 to 535 (QSSSAGSFPSSPVRQSSGSAASQSSSSSHG) is disordered. Residues 507–535 (SSSAGSFPSSPVRQSSGSAASQSSSSSHG) show a composition bias toward low complexity. Residues 666–734 (VQCRAMTVKY…AALTRAVQSL (69 aa)) adopt a coiled-coil conformation. Residues 745-771 (VEDDPRSSLENNPRRRNRHGNNSDVSV) are disordered.

The protein belongs to the protein-tyrosine phosphatase family. Non-receptor class myotubularin subfamily. Mostly expressed in siliques and leaves (including hydathodes), and, to a lower extent, in flowers and roots.

The protein localises to the cytoplasm. Its subcellular location is the endosome membrane. The enzyme catalyses a 1,2-diacyl-sn-glycero-3-phospho-(1D-myo-inositol-3-phosphate) + H2O = a 1,2-diacyl-sn-glycero-3-phospho-(1D-myo-inositol) + phosphate. It carries out the reaction a 1,2-diacyl-sn-glycero-3-phospho-(1D-myo-inositol-3,5-bisphosphate) + H2O = a 1,2-diacyl-sn-glycero-3-phospho-(1D-myo-inositol-5-phosphate) + phosphate. Its function is as follows. Phosphatase with phosphoinositide 3'-phosphatase activity that can use phosphatidylinositol-3-phosphate (PtdIns3P) and phosphatidylinositol-3,5-diphosphate (PtdIns3,5P(2)) as substrates and produces phosphatidylinositol-5-phosphate (PtdIns5P); participates in pathway(s) that transfer gene regulatory signals to the nucleus. Required for recovery after water deprivation, via the accumulation of PtdIns5P upon dehydration; high PtdIns5P levels mediate ATX1 cytoplasmic localization, thus down-regulating the expression of ATX1-dependent genes. Confers sensitivity to soil-water-deficit stress. This Arabidopsis thaliana (Mouse-ear cress) protein is Phosphatidylinositol-3-phosphatase myotubularin-1 (MTM1).